The following is a 621-amino-acid chain: DnaJ homolog subfamily C member 2 (621 aa).

N-acetylmethionine is present on Met-1. Phosphoserine is present on residues Ser-47, Ser-49, Ser-60, and Ser-63. The J domain occupies 88–161 (DHYAVLGLGH…VKRRAFNSVD (74 aa)). A ZRF1-UBD region spans residues 160–250 (VDPTFDNSVP…RDERRWIEKQ (91 aa)). At Ser-183 the chain carries Phosphoserine. 2 disordered regions span residues 294–315 (EKKA…QRQA) and 426–453 (KEEA…GSKH). SANT domains follow at residues 449 to 511 (NGSK…KLDP) and 549 to 604 (TDFT…EMVK).

As to quaternary structure, component of ribosome-associated complex (RAC), a heterodimer composed of Hsp70/DnaK-type chaperone HSPA14 and Hsp40/DnaJ-type chaperone DNAJC2. Interacts (via ZRF1-UBD region) with ID1. Post-translationally, phosphorylated in M (mitotic) phase.

It localises to the nucleus. It is found in the cytoplasm. The protein localises to the cytosol. Its function is as follows. Acts both as a chaperone in the cytosol and as a chromatin regulator in the nucleus. When cytosolic, acts as a molecular chaperone: component of the ribosome-associated complex (RAC), a complex involved in folding or maintaining nascent polypeptides in a folding-competent state. In the RAC complex, stimulates the ATPase activity of the ribosome-associated pool of Hsp70-type chaperones HSPA14 that bind to the nascent polypeptide chain. When nuclear, mediates the switching from polycomb-repressed genes to an active state: specifically recruited at histone H2A ubiquitinated at 'Lys-119' (H2AK119ub), and promotes the displacement of the polycomb PRC1 complex from chromatin, thereby facilitating transcription activation. This is DnaJ homolog subfamily C member 2 (DNAJC2) from Bos taurus (Bovine).